The following is a 202-amino-acid chain: Endothelin-1 (202 aa).

Residues 1 to 25 (MDYFPVIFSLLFVAFQGAPETAVLG) form the signal peptide. The propeptide occupies 26-50 (AELSPRAEKEVQSPPPSTSWRPRRS). Residues 28–47 (LSPRAEKEVQSPPPSTSWRP) form a disordered region. Disulfide bonds link C53–C67 and C55–C63. Positions 74 to 202 (VNTPERVVPY…DQKLIHNRAH (129 aa)) are excised as a propeptide. Residues 110–124 (CQCAHQKDKKCWNFC) are endothelin-like.

This sequence belongs to the endothelin/sarafotoxin family.

Its subcellular location is the secreted. Endothelins are endothelium-derived vasoconstrictor peptides. Probable ligand for G-protein coupled receptors EDNRA and EDNRB which activates PTK2B, BCAR1, BCAR3 and, GTPases RAP1 and RHOA cascade in glomerular mesangial cells. Also binds the DEAR/FBXW7-AS1 receptor. Promotes mesenteric arterial wall remodeling via activation of ROCK signaling and subsequent colocalization of NFATC3 with F-actin filaments. NFATC3 then translocates to the nucleus where it subsequently promotes the transcription of the smooth muscle hypertrophy and differentiation marker ACTA2. This Rattus norvegicus (Rat) protein is Endothelin-1 (Edn1).